The sequence spans 723 residues: Malate synthase G (723 aa).

Acetyl-CoA-binding positions include Val-118, 125-126, Ser-274, and Arg-311; that span reads RY. Catalysis depends on Arg-338, which acts as the Proton acceptor. Glyoxylate contacts are provided by residues Arg-338, Glu-427, and 452-455; that span reads GFLD. 2 residues coordinate Mg(2+): Glu-427 and Asp-455. Pro-536 is a binding site for acetyl-CoA. Cys-617 is modified (cysteine sulfenic acid (-SOH)). Asp-631 functions as the Proton donor in the catalytic mechanism. Cysteine sulfenic acid (-SOH) is present on Cys-688.

This sequence belongs to the malate synthase family. GlcB subfamily. As to quaternary structure, monomer. Mg(2+) is required as a cofactor.

It localises to the cytoplasm. The catalysed reaction is glyoxylate + acetyl-CoA + H2O = (S)-malate + CoA + H(+). The protein operates within carbohydrate metabolism; glyoxylate cycle; (S)-malate from isocitrate: step 2/2. In terms of biological role, involved in the glycolate utilization. Catalyzes the condensation and subsequent hydrolysis of acetyl-coenzyme A (acetyl-CoA) and glyoxylate to form malate and CoA. The sequence is that of Malate synthase G from Shigella flexneri.